A 223-amino-acid chain; its full sequence is Protein-disulfide oxidoreductase DsbI (223 aa).

A helical transmembrane segment spans residues 26–46; the sequence is LLWLLMAVAMGALIILAHSFF. Cys55 and Cys58 are oxidised to a cystine. 2 helical membrane-spanning segments follow: residues 59-78 and 82-102; these read VYIR…AAIN and IILK…GLKF. A disulfide bridge links Cys127 with Cys153. The helical transmembrane segment at 198-218 threads the bilayer; it reads CMLAFGMCLVLLVIMSGAWAL.

The protein belongs to the DsbB family. DsbI subfamily. Interacts with DsbL.

Its subcellular location is the cell inner membrane. Functionally, required for disulfide bond formation in some proteins. Part of a redox system composed of DsbI and DsbL that mediates formation of an essential disulfide bond in AssT. In Escherichia coli O1:K1 / APEC, this protein is Protein-disulfide oxidoreductase DsbI.